A 1037-amino-acid polypeptide reads, in one-letter code: Ras guanine nucleotide exchange factor E (1037 aa).

Residues E5–Q35 are a coiled coil. Disordered regions lie at residues N65–N100, T114–N150, T166–N387, T414–S437, S451–P472, I602–E628, N907–N935, and E1004–S1037. Low complexity-rich tracts occupy residues T114–N145 and T166–N200. A compositionally biased stretch (polar residues) spans P229–K239. Positions S240–S276 are enriched in low complexity. A compositionally biased stretch (polar residues) spans T282–L300. Low complexity predominate over residues S318–T360. A compositionally biased stretch (basic and acidic residues) spans T361–S370. 2 stretches are compositionally biased toward polar residues: residues T372–N387 and P424–S437. In terms of domain architecture, N-terminal Ras-GEF spans N496–R694. The region spanning D726–K1003 is the Ras-GEF domain. Over residues N907–N930 the composition is skewed to low complexity. Polar residues predominate over residues S1027–S1037.

Functionally, promotes the exchange of Ras-bound GDP by GTP. Seems to play a role in chemotaxis. This is Ras guanine nucleotide exchange factor E (gefE) from Dictyostelium discoideum (Social amoeba).